A 231-amino-acid polypeptide reads, in one-letter code: Ferredoxin-type protein NapG (231 aa).

The tat-type signal signal peptide spans 1 to 41 (MSRSAKPQNGRRRFLRDVVRTAGGLAAVGVALGLQQQTARA). 4 4Fe-4S ferredoxin-type domains span residues 50–81 (GAIN…LATL), 89–121 (TPYF…REIE), 130–166 (LAVL…LELE), and 177–208 (FLPT…VLPL). [4Fe-4S] cluster contacts are provided by Cys61, Cys64, Cys67, Cys71, Cys99, Cys102, Cys107, Cys111, Cys139, Cys147, Cys150, Cys154, Cys186, Cys189, Cys192, and Cys196.

The cofactor is [4Fe-4S] cluster. Post-translationally, exported by the Tat system. The position of the signal peptide cleavage has not been experimentally proven.

Its subcellular location is the periplasm. In terms of biological role, required for electron transfer from ubiquinol, via NapC, to the periplasmic nitrate reductase NapAB complex. This is Ferredoxin-type protein NapG (napG) from Escherichia coli (strain K12).